A 552-amino-acid polypeptide reads, in one-letter code: 2-methyl-1,2-propanediol dehydrogenase (552 aa).

It belongs to the GMC oxidoreductase family. It depends on FAD as a cofactor.

The protein localises to the cytoplasm. The catalysed reaction is 2-methylpropane-1,2-diol + NAD(+) = 2-hydroxy-2-methylpropanal + NADH + H(+). Involved in the degradation of methyl tert-butyl ether (MTBE). Catalyzes the conversion of 2-methyl 1,2-propanediol (2-M1,2-PD) to hydroxyisobutyraldehyde. The protein is 2-methyl-1,2-propanediol dehydrogenase of Mycolicibacterium austroafricanum (Mycobacterium austroafricanum).